Here is a 260-residue protein sequence, read N- to C-terminus: DNA repair protein RecO (260 aa).

The interval 239–260 is disordered; that stretch reads SAGVAAARKAGGDGSDGDEGEQ.

This sequence belongs to the RecO family.

In terms of biological role, involved in DNA repair and RecF pathway recombination. The polypeptide is DNA repair protein RecO (Sodalis glossinidius (strain morsitans)).